The chain runs to 289 residues: Pantothenate synthetase (289 aa).

30 to 37 (MGYLHEGH) contributes to the ATP binding site. Residue His-37 is the Proton donor of the active site. Gln-61 contacts (R)-pantoate. Position 61 (Gln-61) interacts with beta-alanine. 147 to 150 (GLKD) contributes to the ATP binding site. Gln-153 serves as a coordination point for (R)-pantoate. ATP contacts are provided by residues Val-176 and 184 to 187 (KSSR).

Belongs to the pantothenate synthetase family. Homodimer.

The protein resides in the cytoplasm. The catalysed reaction is (R)-pantoate + beta-alanine + ATP = (R)-pantothenate + AMP + diphosphate + H(+). Its pathway is cofactor biosynthesis; (R)-pantothenate biosynthesis; (R)-pantothenate from (R)-pantoate and beta-alanine: step 1/1. Catalyzes the condensation of pantoate with beta-alanine in an ATP-dependent reaction via a pantoyl-adenylate intermediate. This Geobacillus thermodenitrificans (strain NG80-2) protein is Pantothenate synthetase.